Here is a 301-residue protein sequence, read N- to C-terminus: 4-hydroxy-tetrahydrodipicolinate synthase (301 aa).

T55 provides a ligand contact to pyruvate. The Proton donor/acceptor role is filled by Y143. Residue K171 is the Schiff-base intermediate with substrate of the active site. I213 contacts pyruvate.

Belongs to the DapA family. As to quaternary structure, homotetramer; dimer of dimers.

The protein localises to the cytoplasm. The catalysed reaction is L-aspartate 4-semialdehyde + pyruvate = (2S,4S)-4-hydroxy-2,3,4,5-tetrahydrodipicolinate + H2O + H(+). It participates in amino-acid biosynthesis; L-lysine biosynthesis via DAP pathway; (S)-tetrahydrodipicolinate from L-aspartate: step 3/4. In terms of biological role, catalyzes the condensation of (S)-aspartate-beta-semialdehyde [(S)-ASA] and pyruvate to 4-hydroxy-tetrahydrodipicolinate (HTPA). The protein is 4-hydroxy-tetrahydrodipicolinate synthase of Psychrobacter arcticus (strain DSM 17307 / VKM B-2377 / 273-4).